Reading from the N-terminus, the 250-residue chain is Probable transcriptional regulatory protein SYNPCC7002_A1640 (250 aa).

It belongs to the TACO1 family.

The protein resides in the cytoplasm. The sequence is that of Probable transcriptional regulatory protein SYNPCC7002_A1640 from Picosynechococcus sp. (strain ATCC 27264 / PCC 7002 / PR-6) (Agmenellum quadruplicatum).